The following is a 101-amino-acid chain: Small ribosomal subunit protein uS14 (101 aa).

The protein belongs to the universal ribosomal protein uS14 family. Part of the 30S ribosomal subunit. Contacts proteins S3 and S10.

Functionally, binds 16S rRNA, required for the assembly of 30S particles and may also be responsible for determining the conformation of the 16S rRNA at the A site. The polypeptide is Small ribosomal subunit protein uS14 (Shewanella putrefaciens (strain CN-32 / ATCC BAA-453)).